The chain runs to 489 residues: MSPPLVIKNGTVVNEDGMFKADVLVKNGIIVEVSPKIIALPEMEIIDATDRLVIPGGIDPHTHMQMPYAGEVTKDDFLRGTQAAVAGGTTMIIDFCCPDHRNGESLMAGYARWRSWADPKVCCDYGLSVAITQWRPETADQMAVITSPEFGVNSFKFYMAYEGTLMVRDDEMYRAMQECAKLRALARVHAENGSVIKEREIDLLAKGVTGPEGHTQSRPEEIEAEATNRACVLAAQANCPVYIVHVMTKGAAAAISHHRAQGSIVFGEPIAAGLALDGSHYYNEDWLHAARYVMSPPLSRDPTTPELLMKLLAAGELHLTGTDNCTYDGCQKSLGKGNFTKIPNGINGVEDRMSVVWEKGVHSGIIDPMRYVSITSATAAKIFNIYPKKGRIAVGSDADIVIFNPNATRTISAETHHHNLDFNIFEGIKCHGVAEITISRGRIVWANGQLQTVPGSGKFVPLLANSPFVFSSHEIREKKKEPRIVERLE.

Residues H61, H63, and K156 each coordinate Zn(2+). K156 is subject to N6-carboxylysine. Y161 serves as a coordination point for substrate. Residues H189 and H245 each coordinate Zn(2+). S295 provides a ligand contact to substrate. Zn(2+) is bound at residue D323. A substrate-binding site is contributed by N344.

The protein belongs to the metallo-dependent hydrolases superfamily. Hydantoinase/dihydropyrimidinase family. As to quaternary structure, homotetramer. It depends on Zn(2+) as a cofactor. In terms of processing, carboxylation allows a single lysine to coordinate two zinc ions.

It localises to the nucleus. The catalysed reaction is 5,6-dihydrouracil + H2O = 3-(carbamoylamino)propanoate + H(+). The chain is Dihydropyrimidinase 1 (dhp-1) from Caenorhabditis briggsae.